Reading from the N-terminus, the 177-residue chain is Ribulose bisphosphate carboxylase small subunit, chloroplastic 5 (177 aa).

A chloroplast-targeting transit peptide spans 1–56; that stretch reads MASSMMASTAAVARAGPAQSSMVAPFNGLRSSVAFPATRKANNDLSTLPSNGGRVS.

It belongs to the RuBisCO small chain family. As to quaternary structure, heterohexadecamer of 8 large and 8 small subunits.

Its subcellular location is the plastid. The protein resides in the chloroplast. RuBisCO catalyzes two reactions: the carboxylation of D-ribulose 1,5-bisphosphate, the primary event in carbon dioxide fixation, as well as the oxidative fragmentation of the pentose substrate. Both reactions occur simultaneously and in competition at the same active site. Although the small subunit is not catalytic it is essential for maximal activity. The protein is Ribulose bisphosphate carboxylase small subunit, chloroplastic 5 of Lemna gibba (Swollen duckweed).